Reading from the N-terminus, the 290-residue chain is 4-hydroxy-tetrahydrodipicolinate synthase (290 aa).

Pyruvate is bound at residue Thr44. Catalysis depends on Tyr132, which acts as the Proton donor/acceptor. The Schiff-base intermediate with substrate role is filled by Lys160. Position 202 (Ile202) interacts with pyruvate.

The protein belongs to the DapA family. In terms of assembly, homotetramer; dimer of dimers.

It is found in the cytoplasm. The catalysed reaction is L-aspartate 4-semialdehyde + pyruvate = (2S,4S)-4-hydroxy-2,3,4,5-tetrahydrodipicolinate + H2O + H(+). It participates in amino-acid biosynthesis; L-lysine biosynthesis via DAP pathway; (S)-tetrahydrodipicolinate from L-aspartate: step 3/4. Catalyzes the condensation of (S)-aspartate-beta-semialdehyde [(S)-ASA] and pyruvate to 4-hydroxy-tetrahydrodipicolinate (HTPA). The polypeptide is 4-hydroxy-tetrahydrodipicolinate synthase (Geotalea uraniireducens (strain Rf4) (Geobacter uraniireducens)).